An 84-amino-acid chain; its full sequence is Toxin Tb1 (84 aa).

A signal peptide spans 1-20 (MKGMILFISCLLLIGIVVEC). One can recognise an LCN-type CS-alpha/beta domain in the interval 21 to 82 (KEGYLMDHEG…VWDRATNKCG (62 aa)). 4 disulfide bridges follow: Cys31–Cys81, Cys35–Cys57, Cys43–Cys62, and Cys47–Cys64. Position 81 is a cysteine amide (Cys81).

This sequence belongs to the long (4 C-C) scorpion toxin superfamily. Sodium channel inhibitor family. Beta subfamily. Expressed by the venom gland.

The protein resides in the secreted. Its function is as follows. Beta toxins bind voltage-independently at site-4 of sodium channels (Nav) and shift the voltage of activation toward more negative potentials thereby affecting sodium channel activation and promoting spontaneous and repetitive firing. Is lethal to mice. In Tityus bahiensis (Brazilian scorpion), this protein is Toxin Tb1.